The chain runs to 378 residues: Succinyl-diaminopimelate desuccinylase (378 aa).

H66 is a binding site for Zn(2+). D68 is an active-site residue. A Zn(2+)-binding site is contributed by D99. Catalysis depends on E133, which acts as the Proton acceptor. 3 residues coordinate Zn(2+): E134, E162, and H348.

The protein belongs to the peptidase M20A family. DapE subfamily. Homodimer. Zn(2+) serves as cofactor. The cofactor is Co(2+).

It carries out the reaction N-succinyl-(2S,6S)-2,6-diaminopimelate + H2O = (2S,6S)-2,6-diaminopimelate + succinate. It functions in the pathway amino-acid biosynthesis; L-lysine biosynthesis via DAP pathway; LL-2,6-diaminopimelate from (S)-tetrahydrodipicolinate (succinylase route): step 3/3. Catalyzes the hydrolysis of N-succinyl-L,L-diaminopimelic acid (SDAP), forming succinate and LL-2,6-diaminopimelate (DAP), an intermediate involved in the bacterial biosynthesis of lysine and meso-diaminopimelic acid, an essential component of bacterial cell walls. This Halorhodospira halophila (strain DSM 244 / SL1) (Ectothiorhodospira halophila (strain DSM 244 / SL1)) protein is Succinyl-diaminopimelate desuccinylase.